The chain runs to 468 residues: uncharacterized protein (468 aa).

The disordered stretch occupies residues 447 to 468; that stretch reads AVHVSNGDKPKVALPDTQLGSH.

This sequence belongs to the mycobacterial PPE family.

This is an uncharacterized protein from Mycobacterium tuberculosis (strain CDC 1551 / Oshkosh).